Reading from the N-terminus, the 363-residue chain is Flagellar P-ring protein (363 aa).

The first 20 residues, 1–20 (MKKFTLLLLCFVLPMTSAYA), serve as a signal peptide directing secretion.

The protein belongs to the FlgI family. As to quaternary structure, the basal body constitutes a major portion of the flagellar organelle and consists of four rings (L,P,S, and M) mounted on a central rod.

The protein resides in the periplasm. It localises to the bacterial flagellum basal body. In terms of biological role, assembles around the rod to form the L-ring and probably protects the motor/basal body from shearing forces during rotation. The sequence is that of Flagellar P-ring protein from Vibrio vulnificus (strain YJ016).